We begin with the raw amino-acid sequence, 951 residues long: MSAREVAVLLLWLSCYGSALWRYSTNSPNYRIFSTRSTIKLEYEGTLFTEWSVPETCFVLNKSSPTTELRCSSPGVHAIKPIVTGPDEEERYLFVESSHTCFLWYYRVRHFFNNFTQLITVWAYDPESADPDELLGNAEEPSINSIVLSTQMATLGQKPVIHTVLKRKVYSSNEKMRRGTWRIVVPMTKDDALKEIRGNQVTFQDCFIADFLILLTFPLLTIPEIPGYLPISSPRGSQLMASWDACVVASAVLVTDMETFHTTDSFKSWTRIRVPPDILSDDERRSVAHVILSRDGIVFLINGVLYIKSFRGFIRLGGIVNLPDGGITGISSRKWCWVNYLLKAKGRRSTFAVWTENEIYLGSILLKFARLVTTTELKNILSLSVTATLTIDRVEYTGHPLEIAVFLNYCTVCNVTKKIFLVIYNEDTKQWVSQDFTLDAPIDSVTMPHFTFSALPGLLLWNKHSIYYCYHNFTFTGILQTPAGHGNLSMLSNDSIIHEVFIDYYGDILVKMENNVIFYSKINTRDAVKLHLWTNYTTRAFIFLSTSGQTYFLYALDDGTIQIQDYPLHLEAQSIAFTTKDKCPYMAFHNNVAHVFYFLDKGEALTVWTQIVYPENTGLYVIVESYGPKILQESHEISFEAAFGYCTKTLTLTFYQNVDYERISDYFETQDKHTGLVLVQFRPSEYSKACPIAQKVFQIAVGCDDKKFIAIKGFSKKGCHHHDFSYVIEKSYLRHQPSKNLRVRYIWGEYGCPLRLDFTEKFQPVVQLFDDNGYVKDVEANFIVWEIHGRDDYSFNNTMAQSGCLHEAQTWKSMIELNKHLPLEEVWGPENYKHCFSYAIGKPGDLNQPYEIINSSNGNHIFWPMGHSGMYVFRVKILDPNYSFCNLTAMFAIETFGLIPSPSVYLVASFLFVLMLLFFTILVLSYFRYMRIYRRYIYEPLHKPQRKRKKN.

Residues 1-19 (MSAREVAVLLLWLSCYGSA) form the signal peptide. Over 20–903 (LWRYSTNSPN…ETFGLIPSPS (884 aa)) the chain is Extracellular. 4 cysteine pairs are disulfide-bonded: cysteine 57–cysteine 71, cysteine 101–cysteine 206, cysteine 246–cysteine 336, and cysteine 410–cysteine 413. N-linked (GlcNAc...) asparagine glycosylation is found at asparagine 61 and asparagine 114. N-linked (GlcNAc...) asparagine glycans are attached at residues asparagine 414, asparagine 472, asparagine 487, asparagine 493, and asparagine 535. Disulfide bonds link cysteine 583–cysteine 690, cysteine 703–cysteine 885, cysteine 719–cysteine 752, and cysteine 804–cysteine 835. An N-linked (GlcNAc...) asparagine glycan is attached at asparagine 796. 3 N-linked (GlcNAc...) asparagine glycosylation sites follow: asparagine 854, asparagine 881, and asparagine 886. The helical transmembrane segment at 904-924 (VYLVASFLFVLMLLFFTILVL) threads the bilayer. At 925 to 951 (SYFRYMRIYRRYIYEPLHKPQRKRKKN) the chain is on the cytoplasmic side.

Belongs to the CATSPERD family. In terms of assembly, component of the CatSper complex or CatSpermasome composed of the core pore-forming members CATSPER1, CATSPER2, CATSPER3 and CATSPER4 as well as auxiliary members CATSPERB, CATSPERG, CATSPERD, CATSPERE, CATSPERZ, C2CD6/CATSPERT, TMEM249, TMEM262 and EFCAB9. HSPA1 may be an additional auxiliary complex member. The core complex members CATSPER1, CATSPER2, CATSPER3 and CATSPER4 form a heterotetrameric channel. The auxiliary CATSPERB, CATSPERG, CATSPERD and CATSPERE subunits form a pavilion-like structure over the pore which stabilizes the complex through interactions with CATSPER4, CATSPER3, CATSPER1 and CATSPER2 respectively. TMEM262/CATSPERH interacts with CATSPERB, further stabilizing the complex. C2CD6/CATSPERT interacts at least with CATSPERD and is required for targeting the CatSper complex in the flagellar membrane.

The protein resides in the cell projection. It is found in the cilium. The protein localises to the flagellum membrane. Its function is as follows. Auxiliary component of the CatSper complex, a complex involved in sperm cell hyperactivation. Sperm cell hyperactivation is needed for sperm motility which is essential late in the preparation of sperm for fertilization. The polypeptide is Cation channel sperm-associated auxiliary subunit epsilon (Homo sapiens (Human)).